The primary structure comprises 560 residues: 2-succinyl-5-enolpyruvyl-6-hydroxy-3-cyclohexene-1-carboxylate synthase (560 aa).

Belongs to the TPP enzyme family. MenD subfamily. Homodimer. It depends on Mg(2+) as a cofactor. Requires Mn(2+) as cofactor. The cofactor is thiamine diphosphate.

It catalyses the reaction isochorismate + 2-oxoglutarate + H(+) = 5-enolpyruvoyl-6-hydroxy-2-succinyl-cyclohex-3-ene-1-carboxylate + CO2. It functions in the pathway quinol/quinone metabolism; 1,4-dihydroxy-2-naphthoate biosynthesis; 1,4-dihydroxy-2-naphthoate from chorismate: step 2/7. The protein operates within quinol/quinone metabolism; menaquinone biosynthesis. Catalyzes the thiamine diphosphate-dependent decarboxylation of 2-oxoglutarate and the subsequent addition of the resulting succinic semialdehyde-thiamine pyrophosphate anion to isochorismate to yield 2-succinyl-5-enolpyruvyl-6-hydroxy-3-cyclohexene-1-carboxylate (SEPHCHC). The protein is 2-succinyl-5-enolpyruvyl-6-hydroxy-3-cyclohexene-1-carboxylate synthase of Staphylococcus saprophyticus subsp. saprophyticus (strain ATCC 15305 / DSM 20229 / NCIMB 8711 / NCTC 7292 / S-41).